The primary structure comprises 443 residues: ATP-dependent protease ATPase subunit HslU (443 aa).

Residues isoleucine 18, 60–65, aspartate 256, glutamate 321, and arginine 393 contribute to the ATP site; that span reads GVGKTE.

Belongs to the ClpX chaperone family. HslU subfamily. As to quaternary structure, a double ring-shaped homohexamer of HslV is capped on each side by a ring-shaped HslU homohexamer. The assembly of the HslU/HslV complex is dependent on binding of ATP.

Its subcellular location is the cytoplasm. Functionally, ATPase subunit of a proteasome-like degradation complex; this subunit has chaperone activity. The binding of ATP and its subsequent hydrolysis by HslU are essential for unfolding of protein substrates subsequently hydrolyzed by HslV. HslU recognizes the N-terminal part of its protein substrates and unfolds these before they are guided to HslV for hydrolysis. This Nitrosospira multiformis (strain ATCC 25196 / NCIMB 11849 / C 71) protein is ATP-dependent protease ATPase subunit HslU.